A 426-amino-acid polypeptide reads, in one-letter code: Histidine--tRNA ligase (426 aa).

Belongs to the class-II aminoacyl-tRNA synthetase family.

The protein localises to the cytoplasm. The enzyme catalyses tRNA(His) + L-histidine + ATP = L-histidyl-tRNA(His) + AMP + diphosphate + H(+). In Saccharolobus islandicus (strain M.16.27) (Sulfolobus islandicus), this protein is Histidine--tRNA ligase.